We begin with the raw amino-acid sequence, 675 residues long: Methionine--tRNA ligase (675 aa).

Residues 15–25 carry the 'HIGH' region motif; it reads PYANGPIHLGH. Residues Cys-146, Cys-149, Cys-159, and Cys-162 each contribute to the Zn(2+) site. A 'KMSKS' region motif is present at residues 332-336; the sequence is KMSKS. Position 335 (Lys-335) interacts with ATP. Positions 573–675 constitute a tRNA-binding domain; that stretch reads DFAKVDMRVA…SGAQPGMQVK (103 aa).

It belongs to the class-I aminoacyl-tRNA synthetase family. MetG type 1 subfamily. Homodimer. The cofactor is Zn(2+).

The protein resides in the cytoplasm. The catalysed reaction is tRNA(Met) + L-methionine + ATP = L-methionyl-tRNA(Met) + AMP + diphosphate. Is required not only for elongation of protein synthesis but also for the initiation of all mRNA translation through initiator tRNA(fMet) aminoacylation. The protein is Methionine--tRNA ligase of Photorhabdus laumondii subsp. laumondii (strain DSM 15139 / CIP 105565 / TT01) (Photorhabdus luminescens subsp. laumondii).